The sequence spans 291 residues: tRNA dimethylallyltransferase (291 aa).

11 to 18 (GPTASGKS) contacts ATP. 13-18 (TASGKS) lines the substrate pocket. An interaction with substrate tRNA region spans residues 42-45 (DSMQ).

The protein belongs to the IPP transferase family. As to quaternary structure, monomer. The cofactor is Mg(2+).

The enzyme catalyses adenosine(37) in tRNA + dimethylallyl diphosphate = N(6)-dimethylallyladenosine(37) in tRNA + diphosphate. Functionally, catalyzes the transfer of a dimethylallyl group onto the adenine at position 37 in tRNAs that read codons beginning with uridine, leading to the formation of N6-(dimethylallyl)adenosine (i(6)A). This is tRNA dimethylallyltransferase from Rubrobacter xylanophilus (strain DSM 9941 / JCM 11954 / NBRC 16129 / PRD-1).